The chain runs to 447 residues: Phosphoglucosamine mutase (447 aa).

Catalysis depends on Ser100, which acts as the Phosphoserine intermediate. Ser100, Asp239, Asp241, and Asp243 together coordinate Mg(2+). Ser100 carries the post-translational modification Phosphoserine.

Belongs to the phosphohexose mutase family. Mg(2+) serves as cofactor. Activated by phosphorylation.

It catalyses the reaction alpha-D-glucosamine 1-phosphate = D-glucosamine 6-phosphate. Its function is as follows. Catalyzes the conversion of glucosamine-6-phosphate to glucosamine-1-phosphate. This Thermoanaerobacter pseudethanolicus (strain ATCC 33223 / 39E) (Clostridium thermohydrosulfuricum) protein is Phosphoglucosamine mutase.